A 750-amino-acid chain; its full sequence is Photosystem I P700 chlorophyll a apoprotein A1 (750 aa).

A run of 8 helical transmembrane segments spans residues 70-93 (VFSAHFGQLSIIFLWLSGMYFHGA), 156-179 (LYCTAIGALIFASLMLFAGWFHYH), 195-219 (LNHHLAGLLGLGSLSWAGHQIHVSL), 291-309 (IAHHHLAIAILFLIAGHMY), 346-369 (WHAQLSLNLAMLGSTTIVVAHHMY), 385-411 (LSLFTHHMWIGGFLIVGAAAHAAIFMV), 433-455 (AIISHLNWVCIFLGFHSFGLYIH), and 531-549 (FLVHHIHAFTIHVTVLILL). [4Fe-4S] cluster-binding residues include Cys-573 and Cys-582. 2 helical membrane passes run 589-610 (HVFLGLFWMYNSISVVIFHFSW) and 664-686 (LSAYGLFFLGAHFVWAFSLMFLF). Residue His-675 participates in chlorophyll a' binding. 2 residues coordinate chlorophyll a: Met-683 and Tyr-691. Trp-692 contributes to the phylloquinone binding site. The chain crosses the membrane as a helical span at residues 724 to 744 (AVGVTHYLLGGIATTWAFFLA).

Belongs to the PsaA/PsaB family. In terms of assembly, the PsaA/B heterodimer binds the P700 chlorophyll special pair and subsequent electron acceptors. PSI consists of a core antenna complex that captures photons, and an electron transfer chain that converts photonic excitation into a charge separation. The eukaryotic PSI reaction center is composed of at least 11 subunits. P700 is a chlorophyll a/chlorophyll a' dimer, A0 is one or more chlorophyll a, A1 is one or both phylloquinones and FX is a shared 4Fe-4S iron-sulfur center. serves as cofactor.

The protein localises to the plastid. Its subcellular location is the chloroplast thylakoid membrane. The enzyme catalyses reduced [plastocyanin] + hnu + oxidized [2Fe-2S]-[ferredoxin] = oxidized [plastocyanin] + reduced [2Fe-2S]-[ferredoxin]. PsaA and PsaB bind P700, the primary electron donor of photosystem I (PSI), as well as the electron acceptors A0, A1 and FX. PSI is a plastocyanin-ferredoxin oxidoreductase, converting photonic excitation into a charge separation, which transfers an electron from the donor P700 chlorophyll pair to the spectroscopically characterized acceptors A0, A1, FX, FA and FB in turn. Oxidized P700 is reduced on the lumenal side of the thylakoid membrane by plastocyanin. This Oryza nivara (Indian wild rice) protein is Photosystem I P700 chlorophyll a apoprotein A1.